A 405-amino-acid polypeptide reads, in one-letter code: Argininosuccinate synthase (405 aa).

Residues 10–18 (AYSGGLDTS) and Ala-37 each bind ATP. Residues Tyr-88 and Ser-93 each coordinate L-citrulline. Gly-118 is a binding site for ATP. L-aspartate contacts are provided by Thr-120, Asn-124, and Asp-125. Asn-124 contacts L-citrulline. L-citrulline is bound by residues Arg-128, Ser-179, Ser-188, Glu-264, and Tyr-276.

It belongs to the argininosuccinate synthase family. Type 1 subfamily. In terms of assembly, homotetramer.

It localises to the cytoplasm. The enzyme catalyses L-citrulline + L-aspartate + ATP = 2-(N(omega)-L-arginino)succinate + AMP + diphosphate + H(+). It participates in amino-acid biosynthesis; L-arginine biosynthesis; L-arginine from L-ornithine and carbamoyl phosphate: step 2/3. The polypeptide is Argininosuccinate synthase (Pseudomonas syringae pv. syringae (strain B728a)).